Consider the following 459-residue polypeptide: 4,4'-diaponeurosporen-aldehyde dehydrogenase (459 aa).

NAD(+)-binding positions include 114–115 (FN) and 188–189 (GS). E210 serves as the catalytic Proton acceptor. M211 is an NAD(+) binding site. C244 acts as the Nucleophile in catalysis. E336 is a binding site for NAD(+).

Belongs to the aldehyde dehydrogenase family.

It catalyses the reaction 4,4'-diaponeurosporenal + NAD(+) + H2O = 4,4'-diaponeurosporenoate + NADH + 2 H(+). The protein operates within carotenoid biosynthesis; staphyloxanthin biosynthesis; staphyloxanthin from farnesyl diphosphate. In terms of biological role, involved in the biosynthesis of the yellow-orange carotenoid staphyloxanthin, which plays a role in the virulence via its protective function against oxidative stress. Catalyzes the oxidation of 4,4'-diaponeurosporen-4-al to yield 4,4'-diaponeurosporenoic acid. The polypeptide is 4,4'-diaponeurosporen-aldehyde dehydrogenase (Staphylococcus aureus (strain NCTC 8325 / PS 47)).